Reading from the N-terminus, the 127-residue chain is Gonadotropin subunit beta-1 (127 aa).

The first 22 residues, 1–22 (MHLAVTALCLTLAPVLARASTS), serve as a signal peptide directing secretion. 6 cysteine pairs are disulfide-bonded: cysteine 23–cysteine 71, cysteine 37–cysteine 86, cysteine 40–cysteine 124, cysteine 48–cysteine 102, cysteine 52–cysteine 104, and cysteine 107–cysteine 114. N-linked (GlcNAc...) asparagine glycosylation is found at asparagine 27 and asparagine 44.

Belongs to the glycoprotein hormones subunit beta family. Heterodimer of an alpha and a beta chain.

Its subcellular location is the secreted. Its function is as follows. Involved in gametogenesis and steroidogenesis. The chain is Gonadotropin subunit beta-1 (cgba) from Anguilla japonica (Japanese eel).